The following is a 330-amino-acid chain: Protein RecA (330 aa).

Position 66-73 (66-73 (GPESSGKT)) interacts with ATP.

It belongs to the RecA family.

The protein resides in the cytoplasm. Functionally, can catalyze the hydrolysis of ATP in the presence of single-stranded DNA, the ATP-dependent uptake of single-stranded DNA by duplex DNA, and the ATP-dependent hybridization of homologous single-stranded DNAs. It interacts with LexA causing its activation and leading to its autocatalytic cleavage. This chain is Protein RecA, found in Bacteroides thetaiotaomicron (strain ATCC 29148 / DSM 2079 / JCM 5827 / CCUG 10774 / NCTC 10582 / VPI-5482 / E50).